The following is a 204-amino-acid chain: Transcriptional regulator GfcR (204 aa).

The protein belongs to the purine/pyrimidine phosphoribosyltransferase family. GfcR subfamily.

In Methanoculleus marisnigri (strain ATCC 35101 / DSM 1498 / JR1), this protein is Transcriptional regulator GfcR.